A 973-amino-acid polypeptide reads, in one-letter code: Coatomer subunit beta (973 aa).

2 HEAT repeats span residues His98–Glu133 and Leu134–His170. Phosphoserine is present on Ser181. HEAT repeat units lie at residues Asn279–Gly317 and Ala318–Ala354. Ser540 carries the post-translational modification Phosphoserine.

As to quaternary structure, oligomeric complex that consists of at least the alpha, beta, beta', gamma, delta, epsilon and zeta subunits. The complex interacts with ARF1 and PAB1. In terms of processing, the N-terminus is blocked.

It localises to the cytoplasm. The protein localises to the golgi apparatus membrane. It is found in the cytoplasmic vesicle. The protein resides in the COPI-coated vesicle membrane. The coatomer is a cytosolic protein complex that binds to dilysine motifs and reversibly associates with Golgi non-clathrin-coated vesicles, which further mediate biosynthetic protein transport from the ER, via the Golgi up to the trans Golgi network. Coatomer complex is required for budding from Golgi membranes, and is essential for the retrograde Golgi-to-ER transport of dilysine-tagged proteins. Required for mitochondrial morphology. In Saccharomyces cerevisiae (strain ATCC 204508 / S288c) (Baker's yeast), this protein is Coatomer subunit beta (SEC26).